A 259-amino-acid polypeptide reads, in one-letter code: MESKKPLILVSNDDGVMAKGISELVKFLRPLGEIVVMAPDSPRSGSGSALTVTHPVHYQLVKREVGLTVYKCTGTPTDCIKLALGSVLDRKPDLIVGGINHGDNSAINVHYSGTMGVVIEGCLKGIPSIGFSLCNHRPDADFEPSGPYIRKIAAMILEKGLPPLTCLNVNFPDTPNLKGVKVCEQAKGCWVNEWVTCPRLDDHNYFWLTGSFTDHELENENNDHWALENGYVAITPTTVDMTAYGFIDELNGYCQQLEF.

Residues Asp-13, Asp-14, Ser-44, and Asn-100 each coordinate a divalent metal cation.

It belongs to the SurE nucleotidase family. The cofactor is a divalent metal cation.

The protein resides in the cytoplasm. It carries out the reaction a ribonucleoside 5'-phosphate + H2O = a ribonucleoside + phosphate. Its function is as follows. Nucleotidase that shows phosphatase activity on nucleoside 5'-monophosphates. This chain is 5'-nucleotidase SurE, found in Bacteroides thetaiotaomicron (strain ATCC 29148 / DSM 2079 / JCM 5827 / CCUG 10774 / NCTC 10582 / VPI-5482 / E50).